The following is a 150-amino-acid chain: Macrodomain Ter protein (150 aa).

The protein belongs to the MatP family. As to quaternary structure, homodimer.

It is found in the cytoplasm. Its function is as follows. Required for spatial organization of the terminus region of the chromosome (Ter macrodomain) during the cell cycle. Prevents early segregation of duplicated Ter macrodomains during cell division. Binds specifically to matS, which is a 13 bp signature motif repeated within the Ter macrodomain. The sequence is that of Macrodomain Ter protein from Shigella boydii serotype 18 (strain CDC 3083-94 / BS512).